Consider the following 336-residue polypeptide: Glycerol-3-phosphate dehydrogenase [NAD(P)+] (336 aa).

Positions 11, 33, and 105 each coordinate NADPH. 3 residues coordinate sn-glycerol 3-phosphate: K105, G141, and S143. A145 lines the NADPH pocket. Positions 196, 249, 259, 260, and 261 each coordinate sn-glycerol 3-phosphate. K196 functions as the Proton acceptor in the catalytic mechanism. Residue R260 coordinates NADPH. NADPH is bound by residues V284 and E286.

This sequence belongs to the NAD-dependent glycerol-3-phosphate dehydrogenase family.

It is found in the cytoplasm. The enzyme catalyses sn-glycerol 3-phosphate + NAD(+) = dihydroxyacetone phosphate + NADH + H(+). It catalyses the reaction sn-glycerol 3-phosphate + NADP(+) = dihydroxyacetone phosphate + NADPH + H(+). Its pathway is membrane lipid metabolism; glycerophospholipid metabolism. Catalyzes the reduction of the glycolytic intermediate dihydroxyacetone phosphate (DHAP) to sn-glycerol 3-phosphate (G3P), the key precursor for phospholipid synthesis. The polypeptide is Glycerol-3-phosphate dehydrogenase [NAD(P)+] (Delftia acidovorans (strain DSM 14801 / SPH-1)).